Here is a 252-residue protein sequence, read N- to C-terminus: Orotidine 5'-phosphate decarboxylase (252 aa).

Substrate-binding positions include aspartate 26, lysine 48, 75 to 84 (DLKFHDIPNT), threonine 135, arginine 196, glutamine 205, glycine 225, and arginine 226. Lysine 77 acts as the Proton donor in catalysis.

This sequence belongs to the OMP decarboxylase family. Type 1 subfamily. As to quaternary structure, homodimer.

It carries out the reaction orotidine 5'-phosphate + H(+) = UMP + CO2. The protein operates within pyrimidine metabolism; UMP biosynthesis via de novo pathway; UMP from orotate: step 2/2. In terms of biological role, catalyzes the decarboxylation of orotidine 5'-monophosphate (OMP) to uridine 5'-monophosphate (UMP). This is Orotidine 5'-phosphate decarboxylase from Sodalis glossinidius (strain morsitans).